The chain runs to 165 residues: E3 ubiquitin-protein ligase RNF181 (165 aa).

An RING-type; atypical zinc finger spans residues 88 to 129 (CPVCLLEFEAEETVIEMPCHHLFHSNCILPWLSKTNSCPLCR). The interval 136–165 (DDSYEEHKKDKARRQQQQHRLENLHGAMYT) is disordered. The residue at position 165 (threonine 165) is a Phosphothreonine.

This sequence belongs to the RNF181 family. Directly interacts with ITGA2B and, as a result, with integrin ITGA2B/ITGB3. There is no evidence that integrin ITGA2B/ITGB3 is an endogenous substrate for RNF181-directed ubiquitination. Auto-ubiquitinated as part of the enzymatic reaction.

It catalyses the reaction S-ubiquitinyl-[E2 ubiquitin-conjugating enzyme]-L-cysteine + [acceptor protein]-L-lysine = [E2 ubiquitin-conjugating enzyme]-L-cysteine + N(6)-ubiquitinyl-[acceptor protein]-L-lysine.. Its pathway is protein modification; protein ubiquitination. Functionally, E3 ubiquitin-protein ligase which accepts ubiquitin from an E2 ubiquitin-conjugating enzyme in the form of a thioester and then directly transfers the ubiquitin to targeted substrates. Catalyzes monoubiquitination of 26S proteasome subunit PSMC2/RPT1. This Mus musculus (Mouse) protein is E3 ubiquitin-protein ligase RNF181.